Consider the following 582-residue polypeptide: PCNA-interacting partner (582 aa).

Composition is skewed to polar residues over residues 471–487 (GVNS…SSGN) and 501–510 (KSSSLTGNTS). The disordered stretch occupies residues 471-514 (GVNSSVGRPTIGTSSGNVHLGRSEKEKVARKSSSLTGNTSSKRK).

It belongs to the PARI family. Interacts with RAD51 and PCNA. Interacts with PARP1. Interacts with TASOR.

It localises to the cytoplasm. The protein resides in the nucleus. Required to suppress inappropriate homologous recombination, thereby playing a central role DNA repair and in the maintenance of genomic stability. Antagonizes homologous recombination by interfering with the formation of the RAD51-DNA homologous recombination structure. Binds single-strand DNA and poly(A) homopolymers. Positively regulate the poly(ADP-ribosyl)ation activity of PARP1; however such function may be indirect. This chain is PCNA-interacting partner (PARPBP), found in Bos taurus (Bovine).